The chain runs to 185 residues: Chromobox protein homolog 1 (185 aa).

Residues lysine 9 and lysine 33 each participate in a glycyl lysine isopeptide (Lys-Gly) (interchain with G-Cter in SUMO2) cross-link. Residues 21 to 79 enclose the Chromo 1 domain; sequence YVVEKVLDRRVVKGKVEYLLKWKGFSDEDNTWEPEENLDCPDLIAEFLQSQKTAHETDK. A disordered region spans residues 63–124; it reads LIAEFLQSQK…RGLEPERIIG (62 aa). Residues 73-89 are compositionally biased toward basic and acidic residues; it reads TAHETDKSEGGKRKADS. Residues serine 89 and serine 91 each carry the phosphoserine modification. Residues 96-121 show a composition bias toward basic and acidic residues; sequence EESKPKKKKEESEKPRGFARGLEPER. Glycyl lysine isopeptide (Lys-Gly) (interchain with G-Cter in SUMO2) cross-links involve residues lysine 99 and lysine 150. Positions 117 to 175 constitute a Chromo 2; shadow subtype domain; it reads LEPERIIGATDSSGELMFLMKWKNSDEADLVPAKEANVKCPQVVISFYEERLTWHSYPS. Residue serine 175 is modified to Phosphoserine.

Homodimer. Interacts directly with CHAF1A, EMSY, LBR, TIF1/TIF1A and TRIM28/TIF1B PXVXL motif via the chromoshadow domain. Interacts directly with histone H3 methylated at 'Lys-9' via the chromo domain. Interacts with SUV39H1 and SETDB1, KMT5B and KMT5C. Interacts with PRDM6. Interacts with POGZ. Interacts with CHAMP1. Interacts with INCENP. Interacts with SGO1; the CBX1 homodimer binds to one molecule of SGO1. Interacts with LRIF1 (via PxVxL motif). Interacts with HDGFL2. Interacts with CHD3. Interacts with CHD4. In terms of processing, not phosphorylated. Ubiquitinated. Expressed in all adult and embryonic tissues.

The protein localises to the nucleus. Functionally, component of heterochromatin. Recognizes and binds histone H3 tails methylated at 'Lys-9', leading to epigenetic repression. Interaction with lamin B receptor (LBR) can contribute to the association of the heterochromatin with the inner nuclear membrane. The sequence is that of Chromobox protein homolog 1 (CBX1) from Homo sapiens (Human).